A 324-amino-acid chain; its full sequence is Spheroidene monooxygenase (324 aa).

The tract at residues 226-324 (GKDPVGEALT…PGKGGRKENA (99 aa)) is disordered. Composition is skewed to low complexity over residues 248-278 (PAAA…VEMP) and 287-313 (VVEA…NFKG).

The protein belongs to the CrtA family. Heme is required as a cofactor.

It catalyses the reaction spheroidene + 4 reduced [2Fe-2S]-[ferredoxin] + 2 O2 + 4 H(+) = spheroiden-2-one + 4 oxidized [2Fe-2S]-[ferredoxin] + 3 H2O. The catalysed reaction is spheroidene + 2 reduced [2Fe-2S]-[ferredoxin] + O2 + 2 H(+) = 2-hydroxyspheroidene + 2 oxidized [2Fe-2S]-[ferredoxin] + H2O. The enzyme catalyses 2-hydroxyspheroidene + 2 reduced [2Fe-2S]-[ferredoxin] + O2 + 2 H(+) = 2,2-dihydroxyspheroidene + 2 oxidized [2Fe-2S]-[ferredoxin] + H2O. It carries out the reaction 2,2-dihydroxyspheroidene = spheroiden-2-one + H2O. It participates in carotenoid biosynthesis; spheroidene biosynthesis. In terms of biological role, involved in the biosynthesis of the carotenoid spheroidene. Catalyzes the introduction of one keto group at the C-2 position of spheroidene. In vitro, can use nonnative substrates and produce oxocarotenoids with a hydroxy and/or a keto group, derived from neurosporene, lycopene, 3,4-didehydrolycopene or 3,4,3',4'-tetradehydrolycopene. This chain is Spheroidene monooxygenase, found in Cereibacter sphaeroides (strain ATCC 17023 / DSM 158 / JCM 6121 / CCUG 31486 / LMG 2827 / NBRC 12203 / NCIMB 8253 / ATH 2.4.1.) (Rhodobacter sphaeroides).